A 122-amino-acid chain; its full sequence is Large ribosomal subunit protein uL14 (122 aa).

Belongs to the universal ribosomal protein uL14 family. Part of the 50S ribosomal subunit. Forms a cluster with proteins L3 and L19. In the 70S ribosome, L14 and L19 interact and together make contacts with the 16S rRNA in bridges B5 and B8.

Binds to 23S rRNA. Forms part of two intersubunit bridges in the 70S ribosome. This Chlorobaculum tepidum (strain ATCC 49652 / DSM 12025 / NBRC 103806 / TLS) (Chlorobium tepidum) protein is Large ribosomal subunit protein uL14.